A 184-amino-acid chain; its full sequence is Glutathione-regulated potassium-efflux system ancillary protein KefG (184 aa).

Belongs to the NAD(P)H dehydrogenase (quinone) family. KefG subfamily. As to quaternary structure, interacts with KefB.

The protein localises to the cell inner membrane. It catalyses the reaction a quinone + NADH + H(+) = a quinol + NAD(+). It carries out the reaction a quinone + NADPH + H(+) = a quinol + NADP(+). In terms of biological role, regulatory subunit of a potassium efflux system that confers protection against electrophiles. Required for full activity of KefB. The protein is Glutathione-regulated potassium-efflux system ancillary protein KefG of Escherichia coli O1:K1 / APEC.